We begin with the raw amino-acid sequence, 219 residues long: Histone H1.4 (219 aa).

A compositionally biased stretch (low complexity) spans Met-1–Ala-15. Residues Met-1–Ser-41 are disordered. Ser-2 is subject to N-acetylserine. A Phosphoserine modification is found at Ser-2. The residue at position 17 (Lys-17) is an N6-acetyllysine. At Thr-18 the chain carries Phosphothreonine. Basic residues predominate over residues Ile-20–Ala-35. Lys-26 carries the post-translational modification N6-acetyllysine; alternate. Lys-26 carries the post-translational modification N6-methyllysine; alternate. Lys-34 carries the post-translational modification N6-(beta-hydroxybutyryl)lysine; alternate. Lys-34 carries the N6-succinyllysine; alternate modification. Ser-36 bears the Phosphoserine mark. Residues Ser-36 to Lys-109 enclose the H15 domain. Lys-52 bears the N6-(beta-hydroxybutyryl)lysine mark. Arg-54 bears the Citrulline mark. 4 positions are modified to N6-(beta-hydroxybutyryl)lysine: Lys-64, Lys-85, Lys-90, and Lys-106. The interval Thr-92–Lys-219 is disordered. Basic residues predominate over residues Lys-119–Lys-140. At Thr-146 the chain carries Phosphothreonine. 2 stretches are compositionally biased toward basic residues: residues Lys-149–Lys-160 and Lys-168–Pro-185. Residue Ser-150 is modified to ADP-ribosylserine. Ser-187 carries the phosphoserine modification. Residues Arg-192–Lys-219 show a composition bias toward basic residues.

It belongs to the histone H1/H5 family. Post-translationally, H1 histones are progressively phosphorylated during the cell cycle, becoming maximally phosphorylated during late G2 phase and M phase, and being dephosphorylated sharply thereafter. In terms of processing, acetylated at Lys-26. Deacetylated at Lys-26 by SIRT1. Citrullination at Arg-54 (H1R54ci) by PADI4 takes place within the DNA-binding site of H1 and results in its displacement from chromatin and global chromatin decondensation, thereby promoting pluripotency and stem cell maintenance. Post-translationally, ADP-ribosylated on Ser-150 in response to DNA damage.

It localises to the nucleus. Its subcellular location is the chromosome. In terms of biological role, histone H1 protein binds to linker DNA between nucleosomes forming the macromolecular structure known as the chromatin fiber. Histones H1 are necessary for the condensation of nucleosome chains into higher-order structured fibers. Also acts as a regulator of individual gene transcription through chromatin remodeling, nucleosome spacing and DNA methylation. This is Histone H1.4 from Rattus norvegicus (Rat).